Reading from the N-terminus, the 42-residue chain is Bacteriocin bavaricin-MN (42 aa).

Cysteine 10 and cysteine 15 are joined by a disulfide.

The protein belongs to the bacteriocin class IIA/YGNGV family.

The protein resides in the secreted. Functionally, has antimicrobial activity. The protein is Bacteriocin bavaricin-MN of Latilactobacillus sakei (Lactobacillus sakei).